Here is a 377-residue protein sequence, read N- to C-terminus: Succinyl-diaminopimelate desuccinylase (377 aa).

A Zn(2+)-binding site is contributed by His66. Residue Asp68 is part of the active site. Asp99 is a binding site for Zn(2+). Catalysis depends on Glu133, which acts as the Proton acceptor. Zn(2+) contacts are provided by Glu134, Glu162, and His348.

Belongs to the peptidase M20A family. DapE subfamily. In terms of assembly, homodimer. Requires Zn(2+) as cofactor. Co(2+) serves as cofactor.

It catalyses the reaction N-succinyl-(2S,6S)-2,6-diaminopimelate + H2O = (2S,6S)-2,6-diaminopimelate + succinate. It participates in amino-acid biosynthesis; L-lysine biosynthesis via DAP pathway; LL-2,6-diaminopimelate from (S)-tetrahydrodipicolinate (succinylase route): step 3/3. Functionally, catalyzes the hydrolysis of N-succinyl-L,L-diaminopimelic acid (SDAP), forming succinate and LL-2,6-diaminopimelate (DAP), an intermediate involved in the bacterial biosynthesis of lysine and meso-diaminopimelic acid, an essential component of bacterial cell walls. The polypeptide is Succinyl-diaminopimelate desuccinylase (Bordetella avium (strain 197N)).